We begin with the raw amino-acid sequence, 231 residues long: Putative N-acetylmannosamine-6-phosphate 2-epimerase (231 aa).

The protein belongs to the NanE family.

It carries out the reaction an N-acyl-D-glucosamine 6-phosphate = an N-acyl-D-mannosamine 6-phosphate. The protein operates within amino-sugar metabolism; N-acetylneuraminate degradation; D-fructose 6-phosphate from N-acetylneuraminate: step 3/5. In terms of biological role, converts N-acetylmannosamine-6-phosphate (ManNAc-6-P) to N-acetylglucosamine-6-phosphate (GlcNAc-6-P). This is Putative N-acetylmannosamine-6-phosphate 2-epimerase from Glaesserella parasuis serovar 5 (strain SH0165) (Haemophilus parasuis).